A 192-amino-acid chain; its full sequence is Ion-translocating oxidoreductase complex subunit A (192 aa).

6 helical membrane passes run 5–25 (LLLLVGTVLVNNFVLVKFLGL), 39–59 (IGMSMATTFVLTLASILSYLV), 72–92 (LRTMAFILVIAVVVQFTEMLV), 102–122 (ALGIYLPLITTNCAVLGVALL), 134–154 (AIYGFGAAVGFSIVLILFSAM), and 171–191 (AIAMITAGLMSLAFMGFTGLV).

The protein belongs to the NqrDE/RnfAE family. As to quaternary structure, the complex is composed of six subunits: RnfA, RnfB, RnfC, RnfD, RnfE and RnfG.

It is found in the cell inner membrane. Functionally, part of a membrane-bound complex that couples electron transfer with translocation of ions across the membrane. This Shewanella loihica (strain ATCC BAA-1088 / PV-4) protein is Ion-translocating oxidoreductase complex subunit A.